A 485-amino-acid polypeptide reads, in one-letter code: MKPTIALVGRPNVGKSTLFNRLTRTKDALVHDLPGLTRDRHYGHGKVGSKPYLVIDTGGFEPVVDSGILHEMAKQTLQAVDEADAVVFLVDGRTGLTPQDKIIADRLRQSPRPVYLAVNKGEGGNRAVLAAEFYELALGDPYVISGAHGDGVYYLIEDILETFPEPEKEEEEAKHPVFAVIGRPNVGKSTLVNAILGEERVIAFDMAGTTRDSIHIDFEREGKPFTIIDTAGVRRRGKVDEAVEKFSVIKAMQAVEAANVAVLVLDAQQDIADQDATIAGFALEAGRALVVAVNKWDGISEERREQVKRDINRKLYFLDFAKFHFISALKERGIDGLFDSIQAAYNAAMIKMPTPKITRVLQSAIERQQPPRAGLVRPKMRYAHQGGMNPPVIVVHGNSLHAISDSYTRYLTQTFRKAFNLQGTPLRIQYNVSENPYENADDKPKKKPLRRVSLSNRIEKREGRKEEKNRFKKKTKVSVKKQFSK.

2 consecutive EngA-type G domains span residues 3-167 (PTIA…PEPE) and 176-349 (PVFA…NAAM). Residues 9–16 (GRPNVGKS), 56–60 (DTGGF), 119–122 (NKGE), 182–189 (GRPNVGKS), 229–233 (DTAGV), and 294–297 (NKWD) contribute to the GTP site. The KH-like domain maps to 350–434 (IKMPTPKITR…PLRIQYNVSE (85 aa)). Residues 435–485 (NPYENADDKPKKKPLRRVSLSNRIEKREGRKEEKNRFKKKTKVSVKKQFSK) are disordered. Basic and acidic residues predominate over residues 457-469 (RIEKREGRKEEKN). Over residues 470–485 (RFKKKTKVSVKKQFSK) the composition is skewed to basic residues.

It belongs to the TRAFAC class TrmE-Era-EngA-EngB-Septin-like GTPase superfamily. EngA (Der) GTPase family. In terms of assembly, associates with the 50S ribosomal subunit.

In terms of biological role, GTPase that plays an essential role in the late steps of ribosome biogenesis. This chain is GTPase Der, found in Neisseria meningitidis serogroup A / serotype 4A (strain DSM 15465 / Z2491).